The following is a 1048-amino-acid chain: Selenate reductase subunit A (1048 aa).

The tat-type signal signal peptide spans 1–39 (MENQHQKFISRRNFIKTSALLGGTAFLGTGLPNIKKTYS). The region spanning 56–129 (ENILYSACLQ…AGIQHAYDPY (74 aa)) is the 4Fe-4S Mo/W bis-MGD-type domain. [4Fe-4S] cluster is bound by residues Cys-63, Cys-66, Cys-70, and Cys-115. Cys-270 lines the Mo-bis(molybdopterin guanine dinucleotide) pocket.

This sequence belongs to the prokaryotic molybdopterin-containing oxidoreductase family. As to quaternary structure, the complex is composed of three subunits: SrdA, SrdB and SrdC. It depends on [4Fe-4S] cluster as a cofactor. The cofactor is Mo-bis(molybdopterin guanine dinucleotide). Predicted to be exported by the Tat system. The position of the signal peptide cleavage has not been experimentally proven.

Its subcellular location is the secreted. The catalysed reaction is selenite + a quinone + H2O = selenate + a quinol. Its function is as follows. Component of the respiratory selenate reductase complex, which catalyzes the reduction of selenate to selenite. SrdA is probably the catalytic subunit that reduces selenate. The chain is Selenate reductase subunit A from Mesobacillus selenatarsenatis (strain DSM 18680 / JCM 14380 / FERM P-15431 / SF-1).